Here is a 391-residue protein sequence, read N- to C-terminus: MAATCEISNVFSNYFNAMYSSEDPTLAPAPPTTFGTEDLVLTLNNQQMTLEGPGPQTRSQRDRTDPLAVLHLAEKASWTSERPQFWSKTQVLEWISYQVEKNKYDASSIDFSRCDMDGATLCSCALEELRLVFGPLGDQLHAQLRDLTSNSSDELSWIIELLEKDGMSFQESLGDSGPFDQGSPFAQELLDDGRQASPYYCSTYGPGAPSPGSSDVSTARTATPQSSHASDSGGSDVDLDLTESKVFPRDGFPDYKKGEPKHGKRKRGRPRKLSKEYWDCLEGKKSKHAPRGTHLWEFIRDILIHPELNEGLMKWENRHEGVFKFLRSEAVAQLWGQKKKNSNMTYEKLSRAMRYYYKREILERVDGRRLVYKFGKNSSGWKEEEVGESRN.

The PNT domain maps to 65–151 (DPLAVLHLAE…AQLRDLTSNS (87 aa)). The segment at 200-271 (YCSTYGPGAP…HGKRKRGRPR (72 aa)) is disordered. The span at 211 to 229 (PGSSDVSTARTATPQSSHA) shows a compositional bias: polar residues. Residues 242–261 (TESKVFPRDGFPDYKKGEPK) show a composition bias toward basic and acidic residues. The segment covering 262–271 (HGKRKRGRPR) has biased composition (basic residues). The ETS DNA-binding region spans 293-375 (THLWEFIRDI…DGRRLVYKFG (83 aa)).

Belongs to the ETS family. In terms of assembly, interacts with TBP. Interacts with CREBBP and EP300; these act as transcriptional coactivators of ELF3 and positively modulate its function. Interacts with XRCC5/KU86 and XRCC6/KU70; these inhibit the ability of ELF3 to bind DNA and negatively modulate its transcriptional activity. Associated with CLND7 and POU2F3. Interacts with ZNF768. As to expression, expressed in small intestine, colon, lung, kidney and uterus. Also expressed in the corneal epithelium and conjunctiva of the developing and adult eye. Not detected in liver, spleen, thymus, brain, heart, skeletal muscle or ovary.

Its subcellular location is the cytoplasm. It is found in the nucleus. Transcriptional activator that binds and transactivates ETS sequences containing the consensus nucleotide core sequence GGA[AT]. Acts synergistically with POU2F3 to transactivate the SPRR2A promoter and with RUNX1 to transactivate the ANGPT1 promoter. Also transactivates collagenase, CCL20, CLND7, FLG, KRT8, NOS2, PTGS2, SPRR2B, TGFBR2 and TGM3 promoters. Represses KRT4 promoter activity. Involved in mediating vascular inflammation. May play an important role in epithelial cell differentiation and tumorigenesis. May be a critical downstream effector of the ERBB2 signaling pathway. May be associated with mammary gland development and involution. Plays an important role in the regulation of transcription with TATA-less promoters in preimplantation embryos, which is essential in preimplantation development. The protein is ETS-related transcription factor Elf-3 of Mus musculus (Mouse).